A 159-amino-acid polypeptide reads, in one-letter code: Transcriptional repressor NrdR (159 aa).

A zinc finger lies at 3–34 (CPFCRHEDTQVVDSRVSEDGAAIRRRRRCSAC). Positions 49-139 (PAVVKKDGSR…VYRRFEDVSE (91 aa)) constitute an ATP-cone domain.

This sequence belongs to the NrdR family. It depends on Zn(2+) as a cofactor.

In terms of biological role, negatively regulates transcription of bacterial ribonucleotide reductase nrd genes and operons by binding to NrdR-boxes. This Burkholderia multivorans (strain ATCC 17616 / 249) protein is Transcriptional repressor NrdR.